Here is a 215-residue protein sequence, read N- to C-terminus: Transmembrane protein 267 (215 aa).

Transmembrane regions (helical) follow at residues Phe-77–Leu-97, Pro-114–Leu-134, and Tyr-178–Leu-198.

The protein resides in the membrane. In Xenopus laevis (African clawed frog), this protein is Transmembrane protein 267 (tmem267).